The primary structure comprises 118 residues: Large ribosomal subunit protein bL20 (118 aa).

The protein belongs to the bacterial ribosomal protein bL20 family.

Its function is as follows. Binds directly to 23S ribosomal RNA and is necessary for the in vitro assembly process of the 50S ribosomal subunit. It is not involved in the protein synthesizing functions of that subunit. This Lacticaseibacillus casei (strain BL23) (Lactobacillus casei) protein is Large ribosomal subunit protein bL20.